The sequence spans 519 residues: Exodeoxyribonuclease 7 large subunit (519 aa).

Residues 500–519 are disordered; the sequence is VGRGKTRKPKEEPPAQGSLL.

This sequence belongs to the XseA family. In terms of assembly, heterooligomer composed of large and small subunits.

The protein localises to the cytoplasm. It carries out the reaction Exonucleolytic cleavage in either 5'- to 3'- or 3'- to 5'-direction to yield nucleoside 5'-phosphates.. In terms of biological role, bidirectionally degrades single-stranded DNA into large acid-insoluble oligonucleotides, which are then degraded further into small acid-soluble oligonucleotides. The chain is Exodeoxyribonuclease 7 large subunit from Cereibacter sphaeroides (strain ATCC 17023 / DSM 158 / JCM 6121 / CCUG 31486 / LMG 2827 / NBRC 12203 / NCIMB 8253 / ATH 2.4.1.) (Rhodobacter sphaeroides).